A 1364-amino-acid polypeptide reads, in one-letter code: ABC-type transporter cns4 (1364 aa).

An ABC transporter 1 domain is found at Ser-42 to Asp-290. N-linked (GlcNAc...) asparagine glycans are attached at residues Asn-152 and Asn-214. The next 5 helical transmembrane spans lie at Leu-435–Ala-455, Ile-483–Leu-503, Glu-508–Phe-528, Ala-540–Ile-560, and Pro-567–Ser-587. The N-linked (GlcNAc...) asparagine glycan is linked to Asn-610. The helical transmembrane segment at Phe-650–Asn-670 threads the bilayer. Residues Asn-689, Asn-711, and Asn-739 are each glycosylated (N-linked (GlcNAc...) asparagine). The interval Asp-697 to Ile-732 is disordered. The ABC transporter 2 domain occupies Ile-737–Gly-985. Gly-779–Thr-786 provides a ligand contact to ATP. 6 helical membrane-spanning segments follow: residues Leu-1076–Gly-1094, Phe-1105–Phe-1125, Ala-1146–Tyr-1166, Ala-1185–Ala-1205, Ala-1211–Val-1231, and Trp-1245–Phe-1265.

The protein belongs to the ABC transporter superfamily. ABCG family. PDR (TC 3.A.1.205) subfamily.

Its subcellular location is the cell membrane. Its function is as follows. ABC-type transporter; part of the gene cluster that mediates the biosynthesis of cordycepin (COR) and pentostatin (PTN), two adenosine analogs with related bioactivity profiles as both mimic adenosine and can inhibit some of the processes that are adenosine dependent. Mediates the pumping of pentostatin but not of cordycepin out of fungal cells. Decreasing intracellular pentostatin releases adenosine deaminase (ADA) inhibition, allowing ADA to deaminate cordycepin into non-toxic 3'-d. The polypeptide is ABC-type transporter cns4 (Cordyceps militaris (strain CM01) (Caterpillar fungus)).